The following is a 1097-amino-acid chain: Protein toll (1097 aa).

The signal sequence occupies residues 1 to 27; it reads MSRLKAASELALLVIILQLLQWPGSEA. The Extracellular segment spans residues 28–807; it reads SFGRDACSEM…ICPAEKGVFI (780 aa). Disulfide bonds link Cys-34-Cys-45, Cys-43-Cys-56, and Cys-79-Cys-107. Residues Asn-80, Asn-140, and Asn-175 are each glycosylated (N-linked (GlcNAc...) asparagine). 15 LRR repeats span residues 175–195, 198–219, 222–243, 246–267, 270–291, 294–314, 320–340, 343–364, 367–388, 391–412, 415–436, 439–460, 474–495, 498–521, and 523–544; these read NLSHLELRANIEEMPSHLFDD, NLESIEFGSNKLRQMPRGIFGK, KLKQLNLWSNQLHNLTKHDFEG, SVLGIDIHDNGIEQLPHDVFAH, NVTDINLSANLFRSLPQGLFDH, HLNEVRLMNNRVPLATLPSRL, ELQILRLRAELQSLPGDLFEH, QITNISLGDNLLKTLPATLLEH, NLLSLDLSNNRLTHLPDSLFAH, NLTDLRLEDNLLTGISGDIFSN, NLVTLVMSRNRLRTIDSRAFVS, GLRHLHLDHNDIDLQQPLLDIM, GLLTLNLRNNSIIFVYNDWKNT, QLRELDLSYNNISSLGYEDLAFLS, and NRLHVNMTHNKIRRIALPEDVH. N-linked (GlcNAc...) asparagine glycosylation is present at Asn-235. Residues Asn-270 and Asn-275 are each glycosylated (N-linked (GlcNAc...) asparagine). Asn-346 carries N-linked (GlcNAc...) asparagine glycosylation. Asn-391 carries an N-linked (GlcNAc...) asparagine glycan. N-linked (GlcNAc...) asparagine glycans are attached at residues Asn-482, Asn-508, and Asn-528. The 60-residue stretch at 561–620 folds into the LRRCT 1 domain; the sequence is NPLVCDCTILWFIQLVRGVHKPQYSRQFKLRTDRLVCSQPNVLEGTPVRQIEPQTLICPL. 4 disulfides stabilise this stretch: Cys-565-Cys-597, Cys-567-Cys-618, Cys-631-Cys-637, and Cys-635-Cys-650. In terms of domain architecture, LRRNT spans 622–663; sequence FSDDPRERKCPRGCNCHVRTYDKALVINCHSGNLTHVPRLPN. N-linked (GlcNAc...) asparagine glycosylation is found at Asn-654, Asn-677, Asn-703, Asn-715, Asn-730, and Asn-738. LRR repeat units lie at residues 669–690, 693–713, and 715–738; these read QLMELHLENNTLLRLPSANTPG, SVTSLHLAGNNLTSIDVDQLP, and NLTHLDISWNHLQMLNATVLGFLN. One can recognise an LRRCT 2 domain in the interval 751 to 801; the sequence is NPWMCDCTAKPLLLFTQDNFERIGDRNEMMCVNAEMPTRMVELSTNDICPA. Intrachain disulfides connect Cys-755/Cys-781 and Cys-757/Cys-799. A helical transmembrane segment spans residues 808–828; the sequence is ALAVVIALTGLLAGFTAALYY. Residues 829 to 1097 lie on the Cytoplasmic side of the membrane; it reads KFQTEIKIWL…INTNAKQSDV (269 aa). The TIR domain occupies 857-993; sequence KKFDAFISYS…WFWDKLRFAL (137 aa).

Belongs to the Toll-like receptor family. In the absence of ligand, forms a low-affinity disulfide-linked homodimer. In the presence of ligand, crystal structures show one Tl molecule bound to a spaetzle C-106 homodimer. However, the active complex probably consists of two Tl molecules bound to a spaetzle C-106 homodimer. This is supported by in vitro experiments which also show binding of the spaetzle C-106 dimer to 2 Tl receptors. Ligand binding induces conformational changes in the extracellular domain of Tl. This may enable a secondary homodimerization interface at the C-terminus of the Tl extracellular domain. As to expression, in early embryos, concentrated in the pseudocleavage furrows that form transiently between nuclei before cellularization and in the cleavage furrows during cellularization (at protein level). Later, found on cells in the mesectoderm, stomodeum, proctodeum, anterior and posterior midguts, splanchnopleura, salivary gland placode and adjacent to the segmentally repeated tracheal placodes (at protein level). During and after germ band shortening, localized in a number of cell types, including the salivary gland, foregut, hindgut, Malpighian tubules and epidermis (at protein level). In embryos, high expression in M13 with comparatively low expression in M12.

The protein resides in the cell membrane. The protein localises to the cytoplasm. Functionally, receptor for the cleaved activated form of spz, spaetzle C-106. Binding to spaetzle C-106 activates the Toll signaling pathway and induces expression of the antifungal peptide drosomycin. Component of the extracellular signaling pathway that establishes dorsal-ventral polarity in the embryo. Promotes heterophilic cellular adhesion. Involved in synaptic targeting of motoneurons RP5 and V to muscle 12 (M12); functions as a repulsive cue inhibiting motoneuron synapse formation on muscle 13 (M13) to guide RP5 and V to the neighboring M12, where its expression is repressed by tey. May also function in embryonic neuronal survival and the synaptic targeting of SNa motoneurons. The polypeptide is Protein toll (Drosophila melanogaster (Fruit fly)).